The primary structure comprises 58 residues: Short neurotoxin MS11 (58 aa).

Intrachain disulfides connect Cys-3/Cys-20, Cys-13/Cys-38, Cys-42/Cys-50, and Cys-51/Cys-56.

The protein belongs to the three-finger toxin family. Short-chain subfamily. In terms of tissue distribution, expressed by the venom gland.

Its subcellular location is the secreted. In terms of biological role, produces peripheral paralysis by blocking neuromuscular transmission at the postsynaptic site. Binds to and inhibits the endogenous nicotinic acetylcholine receptors (nAChR) in the human rhabdomyosarcoma TE 671 cell line with an IC(50) of 266 mM. Not toxic to mice by intraperitoneal injection or to zebrafish by injection at the back dorsolateral region. The protein is Short neurotoxin MS11 of Micrurus surinamensis (Surinam coral snake).